A 743-amino-acid polypeptide reads, in one-letter code: Capsid protein (743 aa).

A disordered region spans residues 665–706 (YVPPEEDFNIQERQQREQRPWTSESESEAEAQEETQAGSVRE).

Belongs to the anelloviridae capsid protein family.

The protein localises to the virion. Its function is as follows. Self assemble to form an icosahedral capsid. This Torque teno virus (isolate Human/China/CT39F/2001) (TTV) protein is Capsid protein.